A 984-amino-acid chain; its full sequence is Hyaluronate lyase (984 aa).

Composition is skewed to polar residues over residues M1 to K12, D19 to H32, and I54 to S66. Disordered regions lie at residues M1–H32 and D49–K68. The N-terminal stretch at M1–A40 is a signal peptide. Active-site residues include N429, H479, and Y488. Basic and acidic residues predominate over residues T701–T726. The interval T701–Q728 is disordered.

It belongs to the polysaccharide lyase 8 family.

The protein localises to the secreted. It carries out the reaction [hyaluronan](n) = n 3-(4-deoxy-beta-D-gluc-4-enuronosyl)-N-acetyl-D-glucosamine + H2O. The polypeptide is Hyaluronate lyase (Streptococcus agalactiae serotype III (strain NEM316)).